The sequence spans 159 residues: Aspartate carbamoyltransferase regulatory chain (159 aa).

4 residues coordinate Zn(2+): Cys113, Cys118, Cys142, and Cys145.

Belongs to the PyrI family. Contains catalytic and regulatory chains. The cofactor is Zn(2+).

Its function is as follows. Involved in allosteric regulation of aspartate carbamoyltransferase. The sequence is that of Aspartate carbamoyltransferase regulatory chain from Saccharolobus islandicus (strain Y.N.15.51 / Yellowstone #2) (Sulfolobus islandicus).